The following is a 695-amino-acid chain: Glycine--tRNA ligase beta subunit (695 aa).

Belongs to the class-II aminoacyl-tRNA synthetase family. In terms of assembly, tetramer of two alpha and two beta subunits.

Its subcellular location is the cytoplasm. The enzyme catalyses tRNA(Gly) + glycine + ATP = glycyl-tRNA(Gly) + AMP + diphosphate. This Lawsonia intracellularis (strain PHE/MN1-00) protein is Glycine--tRNA ligase beta subunit.